We begin with the raw amino-acid sequence, 394 residues long: Ketoisovalerate oxidoreductase subunit VorA (394 aa).

As to quaternary structure, heterotetramer of one alpha, one beta, one delta and one gamma chain.

It carries out the reaction 3-methyl-2-oxobutanoate + 2 oxidized [2Fe-2S]-[ferredoxin] + CoA = 2-methylpropanoyl-CoA + 2 reduced [2Fe-2S]-[ferredoxin] + CO2 + H(+). In Pyrococcus furiosus (strain ATCC 43587 / DSM 3638 / JCM 8422 / Vc1), this protein is Ketoisovalerate oxidoreductase subunit VorA (vorA).